A 201-amino-acid polypeptide reads, in one-letter code: Protease (201 aa).

Residues His55, Asp72, and Cys122 contribute to the active site.

Belongs to the peptidase C5 family. In terms of assembly, interacts with protease cofactor pVI-C; this interaction is necessary for protease activation.

Its subcellular location is the virion. The protein localises to the host nucleus. It catalyses the reaction Cleaves proteins of the adenovirus and its host cell at two consensus sites: -Yaa-Xaa-Gly-Gly-|-Xaa- and -Yaa-Xaa-Gly-Xaa-|-Gly- (in which Yaa is Met, Ile or Leu, and Xaa is any amino acid).. Requires DNA and protease cofactor for maximal activation. Inside nascent virions, becomes partially activated by binding to the viral DNA, allowing it to cleave the cofactor that binds to the protease and fully activates it. Actin, like the viral protease cofactor, seems to act as a cofactor in the cleavage of cytokeratin 18 and of actin itself. Its function is as follows. Cleaves viral precursor proteins (pTP, pIIIa, pVI, pVII, pVIII, and pX) inside newly assembled particles giving rise to mature virions. Protease complexed to its cofactor slides along the viral DNA to specifically locate and cleave the viral precursors. Mature virions have a weakened organization compared to the unmature virions, thereby facilitating subsequent uncoating. Without maturation, the particle lacks infectivity and is unable to uncoat. Late in adenovirus infection, in the cytoplasm, may participate in the cytoskeleton destruction. Cleaves host cell cytoskeletal keratins K7 and K18. The sequence is that of Protease from Ovis aries (Sheep).